We begin with the raw amino-acid sequence, 531 residues long: Peptide chain release factor 3 (531 aa).

A tr-type G domain is found at 13–282 (SKRRTFAIIS…GLTQWAPSPM (270 aa)). GTP contacts are provided by residues 22-29 (SHPDAGKT), 90-94 (DTPGH), and 144-147 (NKLD).

Belongs to the TRAFAC class translation factor GTPase superfamily. Classic translation factor GTPase family. PrfC subfamily.

Its subcellular location is the cytoplasm. Increases the formation of ribosomal termination complexes and stimulates activities of RF-1 and RF-2. It binds guanine nucleotides and has strong preference for UGA stop codons. It may interact directly with the ribosome. The stimulation of RF-1 and RF-2 is significantly reduced by GTP and GDP, but not by GMP. In Vibrio cholerae serotype O1 (strain ATCC 39315 / El Tor Inaba N16961), this protein is Peptide chain release factor 3.